A 209-amino-acid polypeptide reads, in one-letter code: Small ribosomal subunit protein uS4 (209 aa).

The segment at 22-45 (RGRNPLLRKPNPPGQHGMQRKKKS) is disordered. Residues 93 to 154 (CRLDNIVYRL…KSKRLAIVTE (62 aa)) enclose the S4 RNA-binding domain.

It belongs to the universal ribosomal protein uS4 family. In terms of assembly, part of the 30S ribosomal subunit. Contacts protein S5. The interaction surface between S4 and S5 is involved in control of translational fidelity.

One of the primary rRNA binding proteins, it binds directly to 16S rRNA where it nucleates assembly of the body of the 30S subunit. Its function is as follows. With S5 and S12 plays an important role in translational accuracy. In Chlamydia trachomatis serovar A (strain ATCC VR-571B / DSM 19440 / HAR-13), this protein is Small ribosomal subunit protein uS4.